The sequence spans 98 residues: NADH-ubiquinone oxidoreductase chain 4L (98 aa).

The next 3 membrane-spanning stretches (helical) occupy residues 1-21 (MSPM…GLAF), 26-46 (LLSA…ATAT), and 58-78 (ILPM…LAIL).

Belongs to the complex I subunit 4L family.

Its subcellular location is the mitochondrion membrane. It catalyses the reaction a ubiquinone + NADH + 5 H(+)(in) = a ubiquinol + NAD(+) + 4 H(+)(out). Functionally, core subunit of the mitochondrial membrane respiratory chain NADH dehydrogenase (Complex I) which catalyzes electron transfer from NADH through the respiratory chain, using ubiquinone as an electron acceptor. Part of the enzyme membrane arm which is embedded in the lipid bilayer and involved in proton translocation. The protein is NADH-ubiquinone oxidoreductase chain 4L (MT-ND4L) of Scyliorhinus canicula (Small-spotted catshark).